A 666-amino-acid polypeptide reads, in one-letter code: TATA box-binding protein-associated factor RNA polymerase I subunit B (666 aa).

The segment at 1–29 (MICTECENDAFDEEDDGYYYCQRCGVQVE) adopts an RRN7-type zinc-finger fold. Positions 3, 6, 21, and 24 each coordinate Zn(2+). The tract at residues 30 to 64 (NLIQTGVDDGDLIGEGGGTQGALYNPKHRRTEPQP) is B-reader. Disordered stretches follow at residues 45-110 (GGGT…VDKE) and 189-208 (DSEH…LKRH). Residues 65-80 (ITPSQPRFTDDTSRYS) are B-linker. The segment covering 78–89 (RYSQFKSQFESE) has biased composition (polar residues). The N-terminal cyclin fold stretch occupies residues 81 to 285 (QFKSQFESEN…REQMGERSAA (205 aa)). Basic and acidic residues-rich tracts occupy residues 90–110 (NGNK…VDKE) and 189–202 (DSEH…VKDA). Residues 286 to 288 (CPV) are C-terminal cyclin fold. Residues 515-548 (SDGNNPCSSSSRRNESVSIGLDLSSSEHRESSSP) are disordered. A compositionally biased stretch (basic and acidic residues) spans 539–548 (SSEHRESSSP).

This sequence belongs to the RRN7/TAF1B family. In terms of assembly, interacts with TFIIF. Interacts with MEE14/CBP1, TBP1 and NRPB1 (via CTD). In terms of tissue distribution, expressed at high levels in seedlings, inflorescences and young siliques and at lower levels in roots. Not detected in leaves and stems. Detected in root tips and shoot apical meristems, in anthers, primarily in microspores with weaker expression in mature pollen grains and in the central cell of the mature female gametophyte. Not expressed in synergids, egg cells, antipodal cells, endosperm cells and fertilized egg cells.

The protein resides in the nucleus. It localises to the nucleolus. In terms of biological role, component of RNA polymerase I core factor complex that acts as a GTF2B/TFIIB-like factor and plays a key role in multiple steps during transcription initiation such as pre-initiation complex (PIC) assembly and postpolymerase recruitment events in polymerase I (Pol I) transcription. Binds rDNA promoters and plays a role in Pol I recruitment. Required for the development of the one-cell zygote and endosperm in embryos. Required for micropylar pollen tube guidance, but has no effect on ovule development and gametophytic cell fate specification. May regulate the transcription of secreted cysteine-rich peptide (CRP) genes in the embryo sac. This chain is TATA box-binding protein-associated factor RNA polymerase I subunit B, found in Arabidopsis thaliana (Mouse-ear cress).